Consider the following 65-residue polypeptide: Orally active insecticidal peptide-3 (65 aa).

The first 21 residues, 1-21 (MKTSVLFAILGLALLFCLSFG), serve as a signal peptide directing secretion. Residues 22–29 (VELEETGR) constitute a propeptide that is removed on maturation. Disulfide bonds link Cys31–Cys46, Cys38–Cys51, and Cys45–Cys58. At Pro62 the chain carries Proline amide.

The protein belongs to the neurotoxin 10 (Hwtx-1) family. 46 (Jztx-7/10/12) subfamily. As to expression, expressed by the venom gland.

It is found in the secreted. In terms of biological role, probable ion channel inhibitor. Shows insecticidal activity when injected into mealworms. The polypeptide is Orally active insecticidal peptide-3 (Selenotypus plumipes (Australian featherleg tarantula)).